Here is a 253-residue protein sequence, read N- to C-terminus: Sec-independent protein translocase protein TatC (253 aa).

6 helical membrane passes run 18–38 (VSVGTILVAFLGCFHFWKSIF), 69–89 (AIVISMPIIFWQLWLFIAPGL), 96–116 (VILPFVFFGSGMFLIGAAFSY), 151–171 (LILGFGVAFELPVLAYFLAKV), 187–207 (IVVIFIVAAIITPPDVVSQIF), and 208–228 (MALPLVGLYGLSILIAKMVNP). The disordered stretch occupies residues 231 to 253 (KDNENNNENNNENNTKENTKSES). Residues 244 to 253 (NTKENTKSES) are compositionally biased toward basic and acidic residues.

Belongs to the TatC family. In terms of assembly, the Tat system comprises two distinct complexes: a TatABC complex, containing multiple copies of TatA, TatB and TatC subunits, and a separate TatA complex, containing only TatA subunits. Substrates initially bind to the TatABC complex, which probably triggers association of the separate TatA complex to form the active translocon.

It localises to the cell inner membrane. Functionally, part of the twin-arginine translocation (Tat) system that transports large folded proteins containing a characteristic twin-arginine motif in their signal peptide across membranes. Together with TatB, TatC is part of a receptor directly interacting with Tat signal peptides. The chain is Sec-independent protein translocase protein TatC from Helicobacter pylori (strain ATCC 700392 / 26695) (Campylobacter pylori).